A 283-amino-acid chain; its full sequence is Polyamine aminopropyltransferase (283 aa).

The region spanning 2–237 is the PABS domain; it reads ELWYTEEHTD…GHWLFGFASK (236 aa). Glutamine 31 contacts S-methyl-5'-thioadenosine. Histidine 62 and aspartate 86 together coordinate spermidine. S-methyl-5'-thioadenosine-binding positions include glutamate 106 and 137-138; that span reads DG. Aspartate 155 functions as the Proton acceptor in the catalytic mechanism. 155–158 contacts spermidine; it reads DSTD. S-methyl-5'-thioadenosine is bound at residue proline 162.

The protein belongs to the spermidine/spermine synthase family. Homodimer or homotetramer.

It localises to the cytoplasm. The catalysed reaction is S-adenosyl 3-(methylsulfanyl)propylamine + putrescine = S-methyl-5'-thioadenosine + spermidine + H(+). The protein operates within amine and polyamine biosynthesis; spermidine biosynthesis; spermidine from putrescine: step 1/1. Catalyzes the irreversible transfer of a propylamine group from the amino donor S-adenosylmethioninamine (decarboxy-AdoMet) to putrescine (1,4-diaminobutane) to yield spermidine. This is Polyamine aminopropyltransferase from Clostridium perfringens (strain ATCC 13124 / DSM 756 / JCM 1290 / NCIMB 6125 / NCTC 8237 / Type A).